The chain runs to 2325 residues: Serine/threonine-protein kinase MEC1 (2325 aa).

The FAT domain occupies 1363–1886 (LLTTRSAECD…VWYIFSHARS (524 aa)). A PI3K/PI4K catalytic domain is found at 1993-2309 (FDDNVNIFFS…QVDVLIQEAT (317 aa)). Residues 1999–2005 (IFFSLQM) form a G-loop region. The tract at residues 2174-2182 (GLGDRHCEN) is catalytic loop. The tract at residues 2194–2218 (HIDFDCLFEKGTTLPTPEIVPFRLT) is activation loop. An FATC domain is found at 2293-2325 (LPMNIHGQVDVLIQEATSLERLSQMYAGWAAYM).

This sequence belongs to the PI3/PI4-kinase family. ATM subfamily.

The protein resides in the nucleus. The enzyme catalyses L-seryl-[protein] + ATP = O-phospho-L-seryl-[protein] + ADP + H(+). It carries out the reaction L-threonyl-[protein] + ATP = O-phospho-L-threonyl-[protein] + ADP + H(+). In terms of biological role, serine/threonine protein kinase which activates checkpoint signaling upon genotoxic stresses such as ionizing radiation (IR), ultraviolet light (UV), or DNA replication stalling, thereby acting as a DNA damage sensor. Recognizes the substrate consensus sequence [ST]-Q. Recruited to DNA lesions in order to initiate the DNA repair by homologous recombination. Phosphorylates histone H2A to form H2AS128ph (gamma-H2A) at sites of DNA damage, also involved in the regulation of DNA damage response mechanism. Required for cell growth and meiotic recombination. This Candida albicans (strain SC5314 / ATCC MYA-2876) (Yeast) protein is Serine/threonine-protein kinase MEC1 (MEC1).